A 95-amino-acid chain; its full sequence is MSNARDIIKRPVITERSTELMEDKKYTFEVDVRANKTQIKDAIEEIFEVKVTNVNTVNYKGKAKRFGRYTGFTPKRKKAIVQLSADSKELDFFEV.

This sequence belongs to the universal ribosomal protein uL23 family. Part of the 50S ribosomal subunit. Contacts protein L29, and trigger factor when it is bound to the ribosome.

One of the early assembly proteins it binds 23S rRNA. One of the proteins that surrounds the polypeptide exit tunnel on the outside of the ribosome. Forms the main docking site for trigger factor binding to the ribosome. The sequence is that of Large ribosomal subunit protein uL23 from Shouchella clausii (strain KSM-K16) (Alkalihalobacillus clausii).